Consider the following 897-residue polypeptide: Alpha-actinin-2 (897 aa).

An actin-binding region spans residues 1–257 (MNSMNQIETN…IMTYVSCFYH (257 aa)). Calponin-homology (CH) domains lie at 41–145 (KQQR…LRFA) and 154–260 (TSAK…HAFA). 4 Spectrin repeats span residues 284–394 (RLME…WLLN), 404–509 (HLAE…ALER), 519–630 (QLHL…SLQE), and 640–743 (RLRR…EVET). EF-hand domains lie at 756-791 (EQMN…MGYD) and 792-827 (LGEA…ETAD). Residues Asp-769, Asn-773, Asp-780, Asp-805, Asn-807, and Thr-811 each coordinate Ca(2+).

This sequence belongs to the alpha-actinin family. In terms of assembly, homodimer; antiparallel. In terms of processing, ubiquitinated by FBXL22, leading to proteasomal degradation.

The protein resides in the cytoplasm. Its subcellular location is the myofibril. The protein localises to the sarcomere. It is found in the z line. F-actin cross-linking protein which is thought to anchor actin to a variety of intracellular structures. This is a bundling protein. In Gallus gallus (Chicken), this protein is Alpha-actinin-2 (ACTN2).